Consider the following 488-residue polypeptide: GTPase Der (488 aa).

EngA-type G domains are found at residues 3–166 (PVVA…VSDG) and 201–374 (IKLA…QCAT). GTP-binding positions include 9–16 (GRPNVGKS), 56–60 (DTGGI), 118–121 (NKTD), 207–214 (GRPNVGKS), 254–258 (DTAGV), and 319–322 (NKWD). The region spanning 375–459 (KRVSTALLTR…PIRIQFNEGA (85 aa)) is the KH-like domain.

It belongs to the TRAFAC class TrmE-Era-EngA-EngB-Septin-like GTPase superfamily. EngA (Der) GTPase family. Associates with the 50S ribosomal subunit.

Its function is as follows. GTPase that plays an essential role in the late steps of ribosome biogenesis. This chain is GTPase Der, found in Sodalis glossinidius (strain morsitans).